The sequence spans 649 residues: Leucine-rich repeat transmembrane protein FLRT3 (649 aa).

Residues Met-1–Ala-28 form the signal peptide. Residues Lys-29–Glu-58 form the LRRNT domain. The Extracellular segment spans residues Lys-29–Pro-528. 2 disulfides stabilise this stretch: Cys-31/Cys-37 and Cys-35/Cys-44. An interaction with ADGRL3 region spans residues Asp-38 to Asn-67. LRR repeat units follow at residues Asp-59–Lys-80, Lys-84–Lys-104, Tyr-105–Lys-126, Tyr-129–Phe-150, Tyr-155–Thr-176, Ile-177–Gly-197, Ser-200–Val-220, Asn-226–Thr-247, Asn-248–Tyr-269, and Gln-272–Asp-293. The N-linked (GlcNAc...) asparagine glycan is linked to Asn-226. Asn-282 and Asn-296 each carry an N-linked (GlcNAc...) asparagine glycan. An LRRCT domain is found at Asn-305–Asp-357. The cysteines at positions 309 and 334 are disulfide-linked. Residues Val-385–Ser-407 form a disordered region. Residues Pro-389–Gln-401 are compositionally biased toward basic and acidic residues. Positions Lys-409–Leu-504 constitute a Fibronectin type-III domain. The chain crosses the membrane as a helical span at residues Leu-529–Cys-549. At Trp-550 to Ser-649 the chain is on the cytoplasmic side. The disordered stretch occupies residues Leu-622–Ser-649.

Monomer and homodimer. Self-associates (via leucine-rich repeats), giving rise to homooligomers. Interacts with FGFR1. Interacts (via extracellular domain) with ADGRL1/LPHN1 and LPHN2 (via olfactomedin-like domain). Interacts (via extracellular domain) with ADGRL3 (via olfactomedin-like domain); the interaction is direct. Interacts (via extracellular domain) with UNC5B and UNC5D (via extracellular domain); the interaction is direct. Identified in complexes composed of FLRT3, ADGRL3 and UNC5B, respectively FLRT3, ADGRL3 and UNC5D. May also interact (via extracellular domain) with UNC5A and UNC5C. Interacts (via cytoplasmic domain) with ROBO1. Post-translationally, N-glycosylated. In terms of processing, proteolytic cleavage in the juxtamembrane region gives rise to a soluble ectodomain. Cleavage is probably effected by a metalloprotease.

It is found in the cell membrane. Its subcellular location is the presynaptic cell membrane. It localises to the endoplasmic reticulum membrane. The protein resides in the cell junction. The protein localises to the focal adhesion. It is found in the secreted. Its subcellular location is the cell projection. It localises to the axon. The protein resides in the growth cone membrane. Its function is as follows. Functions in cell-cell adhesion, cell migration and axon guidance, exerting an attractive or repulsive role depending on its interaction partners. Plays a role in the spatial organization of brain neurons. Plays a role in vascular development in the retina. Plays a role in cell-cell adhesion via its interaction with ADGRL3 and probably also other latrophilins that are expressed at the surface of adjacent cells. Interaction with the intracellular domain of ROBO1 mediates axon attraction towards cells expressing NTN1. Mediates axon growth cone collapse and plays a repulsive role in neuron guidance via its interaction with UNC5B, and possibly also other UNC-5 family members. Promotes neurite outgrowth (in vitro). Mediates cell-cell contacts that promote an increase both in neurite number and in neurite length. Plays a role in the regulation of the density of glutamaergic synapses. Plays a role in fibroblast growth factor-mediated signaling cascades. Required for normal morphogenesis during embryonic development, but not for normal embryonic patterning. Required for normal ventral closure, headfold fusion and definitive endoderm migration during embryonic development. Required for the formation of a normal basement membrane and the maintenance of a normal anterior visceral endoderm during embryonic development. The polypeptide is Leucine-rich repeat transmembrane protein FLRT3 (FLRT3) (Pongo abelii (Sumatran orangutan)).